The sequence spans 80 residues: Large ribosomal subunit protein bL31 (80 aa).

This sequence belongs to the bacterial ribosomal protein bL31 family. Type A subfamily. Part of the 50S ribosomal subunit.

In terms of biological role, binds the 23S rRNA. In Nostoc punctiforme (strain ATCC 29133 / PCC 73102), this protein is Large ribosomal subunit protein bL31.